A 201-amino-acid chain; its full sequence is Potassium-transporting ATPase KdpC subunit (201 aa).

Residues 7 to 27 traverse the membrane as a helical segment; sequence PAFVVLIALTALTGLAYPLAM.

The protein belongs to the KdpC family. The system is composed of three essential subunits: KdpA, KdpB and KdpC.

It is found in the cell inner membrane. Part of the high-affinity ATP-driven potassium transport (or Kdp) system, which catalyzes the hydrolysis of ATP coupled with the electrogenic transport of potassium into the cytoplasm. This subunit acts as a catalytic chaperone that increases the ATP-binding affinity of the ATP-hydrolyzing subunit KdpB by the formation of a transient KdpB/KdpC/ATP ternary complex. The protein is Potassium-transporting ATPase KdpC subunit of Xanthobacter autotrophicus (strain ATCC BAA-1158 / Py2).